Here is a 499-residue protein sequence, read N- to C-terminus: MEEFQVYLELARSRQHDFLYPLIFREYIYALAYDHGLNSSILVENLGYDNKSSLLIVKRLITRMYQQNHLIISANDSNKKRFWGYNKNLYSQIISEGFAVSVEIPFSLQLISSLEEAKIIKSYNLRSIHSIFPFFEDKFPYLNYVSDVRIPYPIHLEILVQILRYWVKDASSFHLLRLFIYEYYNWNSLITPKKWISTFSKSNPRFFLFLYNFYVCEYESIFLFLRNKSSYLRLTSSGVFFERIYFYAKIEHLVEVFDKDFPSTLWFFKDPFIHYVRYQGKSILASKNTPFFMNKWKYYLIHLWQCNFYVWSQPGKIHINQLSEHSFYFLGYFSNVRLNPSVVRSQMLENSFIIENVMKKLDTIIPIIPLIRSLAKVKFCNGLGHPISKPVWADSSDFDIIDRFLRICRNLSHYYNGSSKKKSLYRIKYILRLSCIKTLARKHKSTVRVFLKRLGSELLEELFTEEEEILSLIFPRASSTLHRLYRGRIWYLDIFYFHQ.

This sequence belongs to the intron maturase 2 family. MatK subfamily.

The protein localises to the plastid. The protein resides in the chloroplast. Usually encoded in the trnK tRNA gene intron. Probably assists in splicing its own and other chloroplast group II introns. This chain is Maturase K, found in Ceratonia siliqua (Carob).